We begin with the raw amino-acid sequence, 300 residues long: GTPase Era (300 aa).

Residues 4–173 (KYGIVAIVGK…INTIKQYLHK (170 aa)) enclose the Era-type G domain. Positions 12-19 (GKPNVGKS) are G1. 12–19 (GKPNVGKS) is a GTP binding site. The tract at residues 38–42 (QTTRN) is G2. The segment at 59 to 62 (DTPG) is G3. GTP is bound by residues 59 to 63 (DTPGF) and 122 to 125 (SKAE). The tract at residues 122–125 (SKAE) is G4. Residues 152-154 (ISA) are G5. The 79-residue stretch at 204–282 (LNHEVPHGVG…SLTIFVKVEN (79 aa)) folds into the KH type-2 domain.

Belongs to the TRAFAC class TrmE-Era-EngA-EngB-Septin-like GTPase superfamily. Era GTPase family. As to quaternary structure, monomer.

The protein localises to the cytoplasm. The protein resides in the cell membrane. An essential GTPase that binds both GDP and GTP, with rapid nucleotide exchange. Plays a role in 16S rRNA processing and 30S ribosomal subunit biogenesis and possibly also in cell cycle regulation and energy metabolism. This chain is GTPase Era, found in Ureaplasma urealyticum serovar 10 (strain ATCC 33699 / Western).